A 422-amino-acid chain; its full sequence is Phthiocerol/phthiodiolone dimycocerosyl transferase (422 aa).

His-124 acts as the Proton acceptor in catalysis.

Belongs to the acyltransferase PapA5 family. As to quaternary structure, monomer. Interacts directly with the acyl carrier protein (ACP) domain of the mycocerosic acid synthase (mas) protein.

It catalyses the reaction 2 a mycocerosyl-[mycocerosic acid synthase] + a phthiocerol = a dimycocerosyl phthiocerol + 2 holo-[mycocerosic acid synthase].. It carries out the reaction 2 a mycocerosyl-[mycocerosic acid synthase] + a phthiodiolone = a dimycocerosyl phthiodiolone + 2 holo-[mycocerosic acid synthase].. The catalysed reaction is 2 a mycocerosyl-[mycocerosic acid synthase] + a phenolphthiocerol = a dimycocerosyl phenolphthiocerol + 2 holo-[mycocerosic acid synthase].. Its function is as follows. Catalyzes diesterification of phthiocerol, phthiodiolone, and phenolphthiocerol with mycocerosic acids, the final step in the phthiocerol, phthiodiolone and phenolphthiocerol dimycocerosate esters (PDIM) synthesis. Can directly transfer the mycocerosate bound to the mycocerosic acid synthase (mas) onto the substrate alcohols. The sequence is that of Phthiocerol/phthiodiolone dimycocerosyl transferase (papA5) from Mycobacterium tuberculosis (strain ATCC 25177 / H37Ra).